A 639-amino-acid chain; its full sequence is Tetracycline resistance protein TetM from transposon Tn5251 (639 aa).

Positions 1 to 242 constitute a tr-type G domain; the sequence is MKIINIGVLA…VITNKFYSST (242 aa). GTP is bound by residues 10 to 17, 74 to 78, and 128 to 131; these read AHVDAGKT, DTPGH, and NKID.

It belongs to the TRAFAC class translation factor GTPase superfamily. Classic translation factor GTPase family. TetM/TetO subfamily.

In terms of biological role, abolishes the inhibitory effect of tetracyclin on protein synthesis by a non-covalent modification of the ribosomes. This is Tetracycline resistance protein TetM from transposon Tn5251 (tetM(5251)) from Streptococcus pneumoniae.